We begin with the raw amino-acid sequence, 188 residues long: Guanylate kinase (188 aa).

The Guanylate kinase-like domain occupies Gly-8–Arg-188. Gly-15–Ser-22 provides a ligand contact to ATP.

The protein belongs to the guanylate kinase family.

The protein resides in the cytoplasm. It carries out the reaction GMP + ATP = GDP + ADP. Essential for recycling GMP and indirectly, cGMP. The polypeptide is Guanylate kinase (Corynebacterium jeikeium (strain K411)).